We begin with the raw amino-acid sequence, 239 residues long: Tetratricopeptide repeat protein 9B (239 aa).

The interval 1–54 is disordered; it reads MQRGALSPVLMLSAAPEPPPRPPPALSPPGPGSAPRHGSARSGPAPEPSGGLAA. Phosphoserine is present on residues Ser7 and Ser27. The segment covering 16-32 has biased composition (pro residues); that stretch reads PEPPPRPPPALSPPGPG. The stretch at 63 to 97 is one TPR 1 repeat; sequence AVAFKAEGQRCYREKKFREAIGKYHRALLQLKAAQ. The interval 98–121 is disordered; it reads GARPGGLPTPSPGPTTSPGPARLS. Over residues 104 to 114 the composition is skewed to pro residues; it reads LPTPSPGPTTS. One copy of the TPR 2 repeat lies at 169–202; sequence FKATYRAGIAFYHLGDYARALRYLQEARSREPTD.

The protein belongs to the TTC9 family.

The polypeptide is Tetratricopeptide repeat protein 9B (Ttc9b) (Mus musculus (Mouse)).